A 118-amino-acid chain; its full sequence is HTH-type transcriptional regulator SarT (118 aa).

The H-T-H motif DNA-binding region spans 55 to 78 (MRDIISYIGIDQSRIVKSVKELSK).

Belongs to the SarA family.

The protein resides in the cytoplasm. Functionally, transcriptional regulator acting as an intermediary between major regulators SarA and agr and virulence genes. Represses alpha-hemolysin (hla) gene expression. The polypeptide is HTH-type transcriptional regulator SarT (sarT) (Staphylococcus aureus (strain Mu50 / ATCC 700699)).